The following is a 173-amino-acid chain: Alpha-crystallin A chain (173 aa).

Met1 carries the post-translational modification N-acetylmethionine. The interval 1-63 is required for complex formation with BFSP1 and BFSP2; sequence MDIAIQQPWF…RTVLDSGVSE (63 aa). Position 6 is a deamidated glutamine; partial (Gln6). Position 45 is a phosphoserine (Ser45). Residue Gln50 is modified to Deamidated glutamine; partial. The sHSP domain occupies 52–162; that stretch reads LFRTVLDSGV…GHSERAIPVS (111 aa). N6-acetyllysine is present on residues Lys70 and Lys99. His100 contributes to the Zn(2+) binding site. A Deamidated asparagine; partial modification is found at Asn101. Glu102 and His107 together coordinate Zn(2+). Ser122 carries the post-translational modification Phosphoserine. A Deamidated asparagine; partial modification is found at Asn123. The disordered stretch occupies residues 144-173; sequence PKVPSGVDAGHSERAIPVSREEKPSSAPSS. Basic and acidic residues predominate over residues 153 to 167; sequence GHSERAIPVSREEKP. His154 lines the Zn(2+) pocket. Residue Ser162 is glycosylated (O-linked (GlcNAc) serine).

Belongs to the small heat shock protein (HSP20) family. In terms of assembly, heteromer composed of three CRYAA and one CRYAB subunits. Inter-subunit bridging via zinc ions enhances stability, which is crucial as there is no protein turn over in the lens. Can also form homodimers and homotetramers (dimers of dimers) which serve as the building blocks of homooligomers. Within homooligomers, the zinc-binding motif is created from residues of 3 different molecules. His-100 and Glu-102 from one molecule are ligands of the zinc ion, and His-107 and His-154 residues from additional molecules complete the site with tetrahedral coordination geometry. Part of a complex required for lens intermediate filament formation composed of BFSP1, BFSP2 and CRYAA. Acetylation at Lys-70 may increase chaperone activity. In terms of processing, undergoes age-dependent proteolytical cleavage at the C-terminus.

It localises to the cytoplasm. The protein resides in the nucleus. Contributes to the transparency and refractive index of the lens. Acts as a chaperone, preventing aggregation of various proteins under a wide range of stress conditions. Required for the correct formation of lens intermediate filaments as part of a complex composed of BFSP1, BFSP2 and CRYAA. The chain is Alpha-crystallin A chain (CRYAA) from Neovison vison (American mink).